The chain runs to 286 residues: UPF0761 membrane protein KPK_5501 (286 aa).

The next 7 helical transmembrane spans lie at 44–64, 74–94, 104–124, 140–160, 183–203, 210–230, and 244–264; these read LLSL…FPMF, FIFA…IEQF, VGAF…DSAL, FAVY…SLAI, LFPL…VPTT, AVIG…AFAL, and VISV…IVLL.

This sequence belongs to the UPF0761 family.

The protein resides in the cell inner membrane. The chain is UPF0761 membrane protein KPK_5501 from Klebsiella pneumoniae (strain 342).